Reading from the N-terminus, the 113-residue chain is U11-theraphotoxin-Hhn1a (113 aa).

Residues 1–21 (MNTVRVTFLLVFVLAVSLGQA) form the signal peptide. Residues 22 to 74 (DKDENRMEMQEKTEQGKSYLDFAENLLLQKLEELEAKLPEEDSEESRNSRQKR) constitute a propeptide that is removed on maturation. Residues 58–69 (KLPEEDSEESRN) are compositionally biased toward basic and acidic residues. Residues 58 to 82 (KLPEEDSEESRNSRQKRCIGEGVPC) form a disordered region. Disulfide bonds link cysteine 75/cysteine 90, cysteine 82/cysteine 95, and cysteine 89/cysteine 110.

The protein belongs to the neurotoxin 14 (magi-1) family. 01 (HNTX-16) subfamily. Expressed by the venom gland.

The protein localises to the secreted. Probable ion channel inhibitor. In Cyriopagopus hainanus (Chinese bird spider), this protein is U11-theraphotoxin-Hhn1a.